The primary structure comprises 1142 residues: Nucleoporin nup131 (1142 aa).

The protein belongs to the nucleoporin Nup133 family. Component of the npc107-120 complex which consists of nup85, nup107, nup120, nup131, nup132 and seh1. Interacts with nup107.

The protein localises to the nucleus. Functionally, functions as a component of the nuclear pore complex (NPC). NPC components, collectively referred to as nucleoporins (NUPs), can play the role of both NPC structural components and of docking or interaction partners for transiently associated nuclear transport factors. Active directional transport is assured by both, a Phe-Gly (FG) repeat affinity gradient for these transport factors across the NPC and a transport cofactor concentration gradient across the nuclear envelope. This is Nucleoporin nup131 (nup131) from Schizosaccharomyces pombe (strain 972 / ATCC 24843) (Fission yeast).